The sequence spans 936 residues: Coiled-coil domain-containing protein 191 (936 aa).

Coiled coils occupy residues 189–270 (RLTM…VKAA) and 364–440 (RDYT…LQAA). Residues 495-541 (LGRTTTGNLQGSLQNVSLSAPGNKQHKTLGAEPSQQPGSNETLRTTS) are disordered. Polar residues-rich tracts occupy residues 497–516 (RTTTGNLQGSLQNVSLSAPG) and 527–541 (PSQQPGSNETLRTTS). Residues 554–592 (NRHVFQQQLIEKQKKKLQEQQKTILELKKNLQLAEAQWA) adopt a coiled-coil conformation. Disordered regions lie at residues 607–656 (LSKP…TPHP) and 691–714 (KAQEEERQKREAEEKEAQLERKRE). Positions 662–739 (EERAIQRAEC…IKRNQQLEAI (78 aa)) form a coiled coil.

The polypeptide is Coiled-coil domain-containing protein 191 (CCDC191) (Homo sapiens (Human)).